Reading from the N-terminus, the 285-residue chain is Formamidopyrimidine-DNA glycosylase (285 aa).

Residue Pro-2 is the Schiff-base intermediate with DNA of the active site. The active-site Proton donor is Glu-3. Catalysis depends on Lys-61, which acts as the Proton donor; for beta-elimination activity. His-102, Arg-121, and Lys-163 together coordinate DNA. The segment at 249-283 adopts an FPG-type zinc-finger fold; the sequence is NAYGQAGKPCARCGTPIARETFMNRGSHFCNRCQK. Residue Arg-273 is the Proton donor; for delta-elimination activity of the active site.

The protein belongs to the FPG family. As to quaternary structure, monomer. The cofactor is Zn(2+).

It catalyses the reaction Hydrolysis of DNA containing ring-opened 7-methylguanine residues, releasing 2,6-diamino-4-hydroxy-5-(N-methyl)formamidopyrimidine.. It carries out the reaction 2'-deoxyribonucleotide-(2'-deoxyribose 5'-phosphate)-2'-deoxyribonucleotide-DNA = a 3'-end 2'-deoxyribonucleotide-(2,3-dehydro-2,3-deoxyribose 5'-phosphate)-DNA + a 5'-end 5'-phospho-2'-deoxyribonucleoside-DNA + H(+). Involved in base excision repair of DNA damaged by oxidation or by mutagenic agents. Acts as a DNA glycosylase that recognizes and removes damaged bases. Has a preference for oxidized purines, such as 7,8-dihydro-8-oxoguanine (8-oxoG). Has AP (apurinic/apyrimidinic) lyase activity and introduces nicks in the DNA strand. Cleaves the DNA backbone by beta-delta elimination to generate a single-strand break at the site of the removed base with both 3'- and 5'-phosphates. This is Formamidopyrimidine-DNA glycosylase from Corynebacterium efficiens (strain DSM 44549 / YS-314 / AJ 12310 / JCM 11189 / NBRC 100395).